A 267-amino-acid chain; its full sequence is Cell division control protein 11 (267 aa).

Residues 6-263 (QNRRFTIMAA…ENYRAAVLEG (258 aa)) enclose the Septin-type G domain. The tract at residues 16–23 (GPRGSGKS) is G1 motif. Residues 16–23 (GPRGSGKS), G66, 146–154 (KSDGLSITE), and R212 each bind GTP. A G3 motif region spans residues 63 to 66 (DTPG). A G4 motif region spans residues 145–148 (SKSD).

It belongs to the TRAFAC class TrmE-Era-EngA-EngB-Septin-like GTPase superfamily. Septin GTPase family. In terms of assembly, component of the septin complex.

Its function is as follows. Septins are GTPases involved in cytokinesis. The septins localize to the site of cleavage and act as a structural scaffold that recruits different components involved in diverse processes at specific stages during the cell cycle. Septins are also involved in cell morphogenesis, chitin deposition, cell cycle regulation, cell compartmentalization and spore wall formation. The chain is Cell division control protein 11 (CDC11) from Encephalitozoon cuniculi (strain GB-M1) (Microsporidian parasite).